Here is a 184-residue protein sequence, read N- to C-terminus: Protein Syd (184 aa).

This sequence belongs to the Syd family.

Its subcellular location is the cell inner membrane. Interacts with the SecY protein in vivo. May bind preferentially to an uncomplexed state of SecY, thus functioning either as a chelating agent for excess SecY in the cell or as a regulatory factor that negatively controls the translocase function. The protein is Protein Syd of Edwardsiella ictaluri (strain 93-146).